Reading from the N-terminus, the 48-residue chain is Large ribosomal subunit protein bL33A (48 aa).

This sequence belongs to the bacterial ribosomal protein bL33 family.

This Streptococcus agalactiae serotype V (strain ATCC BAA-611 / 2603 V/R) protein is Large ribosomal subunit protein bL33A.